The sequence spans 302 residues: Quinolinate synthase (302 aa).

Iminosuccinate is bound by residues His-25 and Ser-42. Cys-87 serves as a coordination point for [4Fe-4S] cluster. Iminosuccinate contacts are provided by residues 113-115 (YVN) and Ser-130. Cys-172 is a binding site for [4Fe-4S] cluster. Residues 198–200 (HPE) and Thr-215 contribute to the iminosuccinate site. Cys-260 provides a ligand contact to [4Fe-4S] cluster.

The protein belongs to the quinolinate synthase family. Type 2 subfamily. Requires [4Fe-4S] cluster as cofactor.

It is found in the cytoplasm. It catalyses the reaction iminosuccinate + dihydroxyacetone phosphate = quinolinate + phosphate + 2 H2O + H(+). Its pathway is cofactor biosynthesis; NAD(+) biosynthesis; quinolinate from iminoaspartate: step 1/1. Its function is as follows. Catalyzes the condensation of iminoaspartate with dihydroxyacetone phosphate to form quinolinate. The sequence is that of Quinolinate synthase from Methanoregula boonei (strain DSM 21154 / JCM 14090 / 6A8).